The chain runs to 672 residues: tRNA 5-methylaminomethyl-2-thiouridine biosynthesis bifunctional protein MnmC (672 aa).

The tract at residues 1 to 241 (MHKVQFADVH…KRECLQGVKA (241 aa)) is tRNA (mnm(5)s(2)U34)-methyltransferase. The interval 269–672 (IGGGIASVFS…LLKGSQVKQG (404 aa)) is FAD-dependent cmnm(5)s(2)U34 oxidoreductase.

It in the N-terminal section; belongs to the methyltransferase superfamily. tRNA (mnm(5)s(2)U34)-methyltransferase family. This sequence in the C-terminal section; belongs to the DAO family. FAD is required as a cofactor.

It is found in the cytoplasm. The enzyme catalyses 5-aminomethyl-2-thiouridine(34) in tRNA + S-adenosyl-L-methionine = 5-methylaminomethyl-2-thiouridine(34) in tRNA + S-adenosyl-L-homocysteine + H(+). Its function is as follows. Catalyzes the last two steps in the biosynthesis of 5-methylaminomethyl-2-thiouridine (mnm(5)s(2)U) at the wobble position (U34) in tRNA. Catalyzes the FAD-dependent demodification of cmnm(5)s(2)U34 to nm(5)s(2)U34, followed by the transfer of a methyl group from S-adenosyl-L-methionine to nm(5)s(2)U34, to form mnm(5)s(2)U34. This chain is tRNA 5-methylaminomethyl-2-thiouridine biosynthesis bifunctional protein MnmC, found in Pasteurella multocida (strain Pm70).